The following is a 282-amino-acid chain: Bis(5'-nucleosyl)-tetraphosphatase, symmetrical (282 aa).

Belongs to the Ap4A hydrolase family.

The enzyme catalyses P(1),P(4)-bis(5'-adenosyl) tetraphosphate + H2O = 2 ADP + 2 H(+). In terms of biological role, hydrolyzes diadenosine 5',5'''-P1,P4-tetraphosphate to yield ADP. The polypeptide is Bis(5'-nucleosyl)-tetraphosphatase, symmetrical (Klebsiella pneumoniae (strain 342)).